The following is a 465-amino-acid chain: Sorting nexin-8 (465 aa).

The segment covering 1 to 19 (MTGRAMDPLPAAAVGAAAE) has biased composition (low complexity). The segment at 1–36 (MTGRAMDPLPAAAVGAAAEAEADEEADPPASDLPTP) is disordered. In terms of domain architecture, PX spans 73–181 (ARDTVQVELI…KLFLSFSGSD (109 aa)). A 1,2-diacyl-sn-glycero-3-phospho-(1D-myo-inositol-3-phosphate) is bound by residues Arg-109, Lys-135, and Arg-148. Thr-452 carries the phosphothreonine modification. A Phosphoserine modification is found at Ser-456.

This sequence belongs to the sorting nexin family.

The protein resides in the early endosome membrane. Its function is as follows. May be involved in several stages of intracellular trafficking. May play a role in intracellular protein transport from early endosomes to the trans-Golgi network. The chain is Sorting nexin-8 (SNX8) from Homo sapiens (Human).